Reading from the N-terminus, the 348-residue chain is tRNA N6-adenosine threonylcarbamoyltransferase (348 aa).

2 residues coordinate Fe cation: His115 and His119. Residues 138-142 (LVSGG), Asp171, Gly184, and Asn276 each bind substrate. Residue Asp304 participates in Fe cation binding.

Belongs to the KAE1 / TsaD family. It depends on Fe(2+) as a cofactor.

It localises to the cytoplasm. It catalyses the reaction L-threonylcarbamoyladenylate + adenosine(37) in tRNA = N(6)-L-threonylcarbamoyladenosine(37) in tRNA + AMP + H(+). Functionally, required for the formation of a threonylcarbamoyl group on adenosine at position 37 (t(6)A37) in tRNAs that read codons beginning with adenine. Is involved in the transfer of the threonylcarbamoyl moiety of threonylcarbamoyl-AMP (TC-AMP) to the N6 group of A37, together with TsaE and TsaB. TsaD likely plays a direct catalytic role in this reaction. In Xylella fastidiosa (strain M23), this protein is tRNA N6-adenosine threonylcarbamoyltransferase.